The sequence spans 69 residues: Beta-defensin 114 (69 aa).

Positions 1–26 are cleaved as a signal peptide; sequence MRIFYYLHFLCYVTFILPATCTLVNA. Disulfide bonds link C29–C57, C36–C50, and C40–C58.

Belongs to the beta-defensin family. As to expression, expressed in epididymis, predominantly in the caput (at protein level).

It localises to the secreted. Has a salt-sensitive antimicrobial activity against Gram-negative bacteria, including E.coli, Gram-positive, including S.aureus, and fungi, including C.albicans. Binds to and neutralizes bacterial lipopolysaccharides (LPS), abolishing TNF production by macrophages challenged with LPS. Rescues the LPS-induced reduction of sperm motility in vitro and may protect from LPS-induced lethality. The chain is Beta-defensin 114 (DEFB114) from Homo sapiens (Human).